The sequence spans 569 residues: Proline--tRNA ligase (569 aa).

This sequence belongs to the class-II aminoacyl-tRNA synthetase family. ProS type 1 subfamily. As to quaternary structure, homodimer.

It is found in the cytoplasm. The catalysed reaction is tRNA(Pro) + L-proline + ATP = L-prolyl-tRNA(Pro) + AMP + diphosphate. Functionally, catalyzes the attachment of proline to tRNA(Pro) in a two-step reaction: proline is first activated by ATP to form Pro-AMP and then transferred to the acceptor end of tRNA(Pro). As ProRS can inadvertently accommodate and process non-cognate amino acids such as alanine and cysteine, to avoid such errors it has two additional distinct editing activities against alanine. One activity is designated as 'pretransfer' editing and involves the tRNA(Pro)-independent hydrolysis of activated Ala-AMP. The other activity is designated 'posttransfer' editing and involves deacylation of mischarged Ala-tRNA(Pro). The misacylated Cys-tRNA(Pro) is not edited by ProRS. This chain is Proline--tRNA ligase, found in Levilactobacillus brevis (strain ATCC 367 / BCRC 12310 / CIP 105137 / JCM 1170 / LMG 11437 / NCIMB 947 / NCTC 947) (Lactobacillus brevis).